The sequence spans 240 residues: tRNA (guanine-N(1)-)-methyltransferase (240 aa).

S-adenosyl-L-methionine contacts are provided by residues Gly108 and 127-132; that span reads LGDYIL.

It belongs to the RNA methyltransferase TrmD family. Homodimer.

The protein resides in the cytoplasm. The catalysed reaction is guanosine(37) in tRNA + S-adenosyl-L-methionine = N(1)-methylguanosine(37) in tRNA + S-adenosyl-L-homocysteine + H(+). Functionally, specifically methylates guanosine-37 in various tRNAs. This chain is tRNA (guanine-N(1)-)-methyltransferase, found in Streptococcus sanguinis (strain SK36).